Consider the following 299-residue polypeptide: MNILLFGKTGQVGWELQRALAPLGNLIAFDVHSTDYCGDFSNPEGVAETVRSIRPDIIVNAAAHTAVDKAESEPEFAQLINATSVEAIAKAANEVGAWVIHYSTDYVFPGNGDMPWLETDATAPLNVYGETKLAGEKALQEYCAKHLIFRTSWVYAGKGNNFAKTMLRLAKEREELAVINDQFGAPTGAELLADCTAHAIRVALNKPDVAGLYHLVASGTTTWYDYAALVFEEARKAGIPLALNKLNAVPTTAYPTPARRPHNSRLNTEKFQQNFALVLPDWQVGVKRMLNELFTTTAI.

Residues 10 to 12, D30, 39 to 40, and 63 to 65 each bind NADH; these read GQV, DF, and AHT. 11 to 12 contacts NADPH; sequence QV. NADPH is bound by residues 39 to 40, 63 to 65, and Y102; these read DF and AHT. Position 104-105 (104-105) interacts with dTDP-beta-L-rhamnose; sequence TD. Positions 128 and 132 each coordinate NADH. NADPH-binding residues include Y128 and K132. Y128 acts as the Proton donor/acceptor in catalysis. W153 is a dTDP-beta-L-rhamnose binding site.

It belongs to the dTDP-4-dehydrorhamnose reductase family. As to quaternary structure, homodimer. Mg(2+) serves as cofactor.

It carries out the reaction dTDP-beta-L-rhamnose + NADP(+) = dTDP-4-dehydro-beta-L-rhamnose + NADPH + H(+). It functions in the pathway carbohydrate biosynthesis; dTDP-L-rhamnose biosynthesis. Its pathway is bacterial outer membrane biogenesis; LPS O-antigen biosynthesis. Its function is as follows. Involved in the biosynthesis of the dTDP-L-rhamnose which is an important component of lipopolysaccharide (LPS). Catalyzes the reduction of dTDP-6-deoxy-L-lyxo-4-hexulose to yield dTDP-L-rhamnose. RmlD uses NADH and NADPH nearly equally well. In Escherichia coli (strain K12), this protein is dTDP-4-dehydrorhamnose reductase.